The following is a 59-amino-acid chain: Pycsar effector protein MePycTM (59 aa).

The chain crosses the membrane as a helical span at residues 36-56 (VAVAIYLLGAAMLSSGAAVLA).

Its subcellular location is the cell membrane. Functionally, pycsar (pyrimidine cyclase system for antiphage resistance) provides immunity against bacteriophage. The pyrimidine cyclase (PycC) synthesizes cyclic nucleotides in response to infection; these serve as specific second messenger signals. The signals activate the adjacent effector, leading to bacterial cell death and abortive phage infection. A clade D Pycsar system. In terms of biological role, the effector gene of a two-gene Pycsar system. Expression of this and adjacent uridylate cyclase MePycC (AC A0A1C5G2V9) probably confers resistance to bacteriophage. The genes are probably only expressed in response to bacteriophage infection. Probably only responds to cUMP (produced by its cognate NTP cyclase), acts by impairing membrane integrity. The protein is Pycsar effector protein MePycTM of Micromonospora echinofusca.